The chain runs to 460 residues: Endoglucanase 2 (460 aa).

A signal peptide spans 1 to 32 (MIKGSSLKRIKSLVMMAIFSVSIITTAIVSSA). The Proton donor role is filled by E99. The active-site Nucleophile is D155. Residues 400 to 460 (QQGLKGDVNN…FAQLKVKLLN (61 aa)) form the Dockerin domain.

Belongs to the glycosyl hydrolase 8 (cellulase D) family.

It catalyses the reaction Endohydrolysis of (1-&gt;4)-beta-D-glucosidic linkages in cellulose, lichenin and cereal beta-D-glucans.. This Ruminiclostridium josui (Clostridium josui) protein is Endoglucanase 2 (celB).